The sequence spans 250 residues: Ubiquinone/menaquinone biosynthesis C-methyltransferase UbiE (250 aa).

Residues T74, D94, 122–123 (DA), and S139 contribute to the S-adenosyl-L-methionine site.

The protein belongs to the class I-like SAM-binding methyltransferase superfamily. MenG/UbiE family.

It carries out the reaction a 2-demethylmenaquinol + S-adenosyl-L-methionine = a menaquinol + S-adenosyl-L-homocysteine + H(+). It catalyses the reaction a 2-methoxy-6-(all-trans-polyprenyl)benzene-1,4-diol + S-adenosyl-L-methionine = a 5-methoxy-2-methyl-3-(all-trans-polyprenyl)benzene-1,4-diol + S-adenosyl-L-homocysteine + H(+). Its pathway is quinol/quinone metabolism; menaquinone biosynthesis; menaquinol from 1,4-dihydroxy-2-naphthoate: step 2/2. The protein operates within cofactor biosynthesis; ubiquinone biosynthesis. In terms of biological role, methyltransferase required for the conversion of demethylmenaquinol (DMKH2) to menaquinol (MKH2) and the conversion of 2-polyprenyl-6-methoxy-1,4-benzoquinol (DDMQH2) to 2-polyprenyl-3-methyl-6-methoxy-1,4-benzoquinol (DMQH2). The protein is Ubiquinone/menaquinone biosynthesis C-methyltransferase UbiE of Ruegeria sp. (strain TM1040) (Silicibacter sp.).